A 245-amino-acid polypeptide reads, in one-letter code: 1-(5-phosphoribosyl)-5-[(5-phosphoribosylamino)methylideneamino] imidazole-4-carboxamide isomerase (245 aa).

The Proton acceptor role is filled by Asp-7. Catalysis depends on Asp-129, which acts as the Proton donor.

It belongs to the HisA/HisF family.

Its subcellular location is the cytoplasm. The catalysed reaction is 1-(5-phospho-beta-D-ribosyl)-5-[(5-phospho-beta-D-ribosylamino)methylideneamino]imidazole-4-carboxamide = 5-[(5-phospho-1-deoxy-D-ribulos-1-ylimino)methylamino]-1-(5-phospho-beta-D-ribosyl)imidazole-4-carboxamide. It participates in amino-acid biosynthesis; L-histidine biosynthesis; L-histidine from 5-phospho-alpha-D-ribose 1-diphosphate: step 4/9. In Shigella boydii serotype 4 (strain Sb227), this protein is 1-(5-phosphoribosyl)-5-[(5-phosphoribosylamino)methylideneamino] imidazole-4-carboxamide isomerase.